A 527-amino-acid polypeptide reads, in one-letter code: Serine/threonine-protein kinase CHK1 (527 aa).

A Protein kinase domain is found at 15–281 (VVLGDTVGQG…LKALKLHPWV (267 aa)). ATP is bound by residues 21-29 (VGQGAFACV) and lysine 45. Aspartate 142 acts as the Proton acceptor in catalysis.

The protein belongs to the protein kinase superfamily. CAMK Ser/Thr protein kinase family. NIM1 subfamily.

The protein resides in the nucleus. It catalyses the reaction L-seryl-[protein] + ATP = O-phospho-L-seryl-[protein] + ADP + H(+). The enzyme catalyses L-threonyl-[protein] + ATP = O-phospho-L-threonyl-[protein] + ADP + H(+). Its function is as follows. Serine/threonine-protein kinase which is required for checkpoint-mediated cell cycle arrest and activation of DNA repair in response to the presence of DNA damage or unreplicated DNA. May also negatively regulate cell cycle progression during unperturbed cell cycles. Controls phosphorylation and abundance of PDS1 to prevent anaphase entry. Also helps prevent mitotic exit. This chain is Serine/threonine-protein kinase CHK1 (CHK1), found in Saccharomyces cerevisiae (strain ATCC 204508 / S288c) (Baker's yeast).